The primary structure comprises 469 residues: Collagenase 3 (469 aa).

An N-terminal signal peptide occupies residues 1-17; the sequence is SSLSVLVLSLSFAYCLS. Residues 18 to 100 constitute a propeptide, activation peptide; the sequence is APVPQDEDSE…QPRCGVPDVG (83 aa). Positions 92–99 match the Cysteine switch motif; the sequence is PRCGVPDV. C94 lines the Zn(2+) pocket. The N-linked (GlcNAc...) asparagine glycan is linked to N115. D126 contributes to the Ca(2+) binding site. An N-linked (GlcNAc...) asparagine glycan is attached at N150. D160 contacts Ca(2+). Residues H170 and D172 each contribute to the Zn(2+) site. The Ca(2+) site is built by D177, G178, and L182. H185 contributes to the Zn(2+) binding site. The Ca(2+) site is built by G194 and D196. Residue H198 participates in Zn(2+) binding. Residues D200, D201, and E203 each coordinate Ca(2+). Position 220 (H220) interacts with Zn(2+). The active site involves E221. 3 residues coordinate Zn(2+): H224, H230, and M238. Residues 266 to 469 are interaction with collagen; sequence PGNRDPHPKH…ILKTNFVLMC (204 aa). 4 Hemopexin repeats span residues 279–328, 329–375, 377–425, and 426–469; these read PEKC…WPEL, PNKL…GFPK, LKAI…FPGI, and GEKV…VLMC. C282 and C469 are joined by a disulfide. Ca(2+) contacts are provided by D289, I291, D333, A335, A383, and D430.

This sequence belongs to the peptidase M10A family. It depends on Ca(2+) as a cofactor. Zn(2+) is required as a cofactor. Post-translationally, the proenzyme is activated by removal of the propeptide; this cleavage can be effected by other matrix metalloproteinases and may involve several cleavage steps. Cleavage can also be autocatalytic, after partial maturation by another protease or after treatment with 4-aminophenylmercuric acetate (APMA) (in vitro).

It is found in the secreted. It localises to the extracellular space. The protein localises to the extracellular matrix. Functionally, plays a role in the degradation of extracellular matrix proteins including fibrillar collagen, fibronectin, TNC and ACAN. Cleaves several types of triple helical collagen. May also function by activating or degrading key regulatory proteins. Plays a role in wound healing, tissue remodeling, cartilage degradation, bone development, bone mineralization and ossification. This chain is Collagenase 3 (mmp13), found in Xenopus laevis (African clawed frog).